Here is a 508-residue protein sequence, read N- to C-terminus: Hydroxymethylglutaryl-CoA synthase, mitochondrial (508 aa).

The N-terminal 37 residues, 1 to 37 (MQRLLAPARRVLQVKRAMQETSLTPAHLLSAAQQRFS), are a transit peptide targeting the mitochondrion. Residue Lys52 is modified to N6-succinyllysine. (3S)-3-hydroxy-3-methylglutaryl-CoA-binding residues include Glu80 and Ala81. N6-acetyllysine; alternate occurs at positions 83 and 118. N6-succinyllysine; alternate is present on residues Lys83 and Lys118. Glu132 serves as the catalytic Proton donor/acceptor. (3S)-3-hydroxy-3-methylglutaryl-CoA contacts are provided by Cys166, Asn204, and Thr208. Cys166 (acyl-thioester intermediate) is an active-site residue. Lys221 bears the N6-succinyllysine mark. The residue at position 243 (Lys243) is an N6-acetyllysine. An N6-acetyllysine; alternate modification is found at Lys256. An N6-succinyllysine; alternate modification is found at Lys256. 2 residues coordinate (3S)-3-hydroxy-3-methylglutaryl-CoA: Ser258 and His301. The active-site Proton donor/acceptor is the His301. Lys306 is subject to N6-acetyllysine. Lys310 contacts (3S)-3-hydroxy-3-methylglutaryl-CoA. An N6-acetyllysine; alternate mark is found at Lys310 and Lys327. 2 positions are modified to N6-succinyllysine; alternate: Lys310 and Lys327. Lys333 carries the N6-succinyllysine modification. N6-acetyllysine; alternate occurs at positions 342, 350, 354, and 358. An N6-succinyllysine; alternate mark is found at Lys342, Lys350, Lys354, and Lys358. Residues Asn380 and Ser414 each coordinate (3S)-3-hydroxy-3-methylglutaryl-CoA. At Lys427 the chain carries N6-acetyllysine. A Phosphoserine modification is found at Ser433. Lys437 bears the N6-acetyllysine mark. Position 440 is a phosphoserine (Ser440). Residue Lys447 is modified to N6-acetyllysine; alternate. Lys447 is modified (N6-succinyllysine; alternate). Ser456 is subject to Phosphoserine. Position 473 is an N6-acetyllysine; alternate (Lys473). Lys473 carries the N6-succinyllysine; alternate modification. A Phosphoserine modification is found at Ser477.

Belongs to the thiolase-like superfamily. HMG-CoA synthase family. In terms of assembly, homodimer. In terms of processing, acetylation of Lys-427 is observed in liver mitochondria from fasted mice but not from fed mice. Succinylated. Desuccinylated by SIRT5. Succinylation, at least at Lys-83 and Lys-310, inhibits the enzymatic activity. In terms of tissue distribution, liver and kidney.

It localises to the mitochondrion. It carries out the reaction acetoacetyl-CoA + acetyl-CoA + H2O = (3S)-3-hydroxy-3-methylglutaryl-CoA + CoA + H(+). It participates in metabolic intermediate biosynthesis; (R)-mevalonate biosynthesis; (R)-mevalonate from acetyl-CoA: step 2/3. Catalyzes the first irreversible step in ketogenesis, condensing acetyl-CoA to acetoacetyl-CoA to form HMG-CoA, which is converted by HMG-CoA reductase (HMGCR) into mevalonate. The polypeptide is Hydroxymethylglutaryl-CoA synthase, mitochondrial (Hmgcs2) (Mus musculus (Mouse)).